Here is a 552-residue protein sequence, read N- to C-terminus: MAGUK p55 subfamily member 2 (552 aa).

L27 domains lie at 8-59 (SESA…EETK) and 60-118 (LEAV…YETP). The residue at position 42 (S42) is a Phosphoserine. Phosphothreonine is present on T117. S121 bears the Phosphoserine mark. Positions 140 to 219 (MVGIRKTAGE…SVILKILPSY (80 aa)) constitute a PDZ domain. The SH3 domain occupies 225–293 (PRQVFVKCHF…PSQLLEEKRK (69 aa)). Residues 350 to 537 (RKTLVLIGAQ…TFRELQTAME (188 aa)) enclose the Guanylate kinase-like domain.

The protein belongs to the MAGUK family. As to quaternary structure, can homomultimerise. Interacts with CACNG2. Interacts (via the SH3-Guanylate kinase-like sub-module) with DLG4/PSD95 and DLGAP1/GKAP. Interacts (via the PDZ domain) with CADM1 (via C-terminus). Interacts with KCNN2/SK2 (via N-terminal domain). Interacts with SRC. In terms of processing, phosphorylated by SRC. As to expression, expressed in hippocampal neurons.

The protein localises to the cell projection. Its subcellular location is the dendrite. It is found in the postsynaptic density. It localises to the cytoplasm. The protein resides in the cytoskeleton. The protein localises to the membrane. In terms of biological role, postsynaptic MAGUK scaffold protein that links CADM1 cell adhesion molecules to core components of the postsynaptic density. In CA1 pyramidal neurons, required for synaptic KCNN2-containing channel function and long-term potentiation expression. Seems to negatively regulate SRC function in epithelial cells. In Rattus norvegicus (Rat), this protein is MAGUK p55 subfamily member 2.